The primary structure comprises 606 residues: MKVRSAGGDGDALCVTEEDLAGDDEDMPTFPCTQKGRPGPRCSRCQKNLSLHTSVRILYLFLALLLVAVAVLASLVFRKVDSLSEDISLTQSIYDKKLVLMQKNLQGLDPKALNNCSFCHEAGQLGPEIRKLQEELEGIQKLLLAQEVQLDQTLQAQEVLSTTSRQISQEMGSCSFSIHQVNQSLGLFLAQVRGWQATTAGLDLSLKDLTQECYDVKAAVHQINFTVGQTSEWIHGIQRKTDEETLTLQKIVTDWQNYTRLFSGLRTTSTKTGEAVKNIQATLGASSQRISQNSESMHDLVLQVMGLQLQLDNISSFLDDHEENMHDLQYHTHYAQNRTVERFESLEGRMASHEIEIGTIFTNINATDNHVHSMLKYLDDVRLSCTLGFHTHAEELYYLNKSVSIMLGTTDLLRERFSLLSARLDLNVRNLSMIVEEMKAVDTQHGEILRNVTILRGAPGPPGPRGFKGDMGVKGPVGGRGPKGDPGSLGPLGPQGPQGQPGEAGPVGERGPVGPRGFPGLKGSKGSFGTGGPRGQPGPKGDIGPPGPEGPPGSPGPSGPQGKPGIAGKTGSPGQRGAMGPKGEPGIQGPPGLPGPPGPPGSQSFY.

At 1 to 56 (MKVRSAGGDGDALCVTEEDLAGDDEDMPTFPCTQKGRPGPRCSRCQKNLSLHTSVR) the chain is on the cytoplasmic side. Residues 57 to 77 (ILYLFLALLLVAVAVLASLVF) traverse the membrane as a helical; Signal-anchor for type II membrane protein segment. Over 78 to 606 (RKVDSLSEDI…PGPPGSQSFY (529 aa)) the chain is Extracellular. N115, N182, N224, N257, N313, N337, N365, N400, N430, and N451 each carry an N-linked (GlcNAc...) asparagine glycan. The disordered stretch occupies residues 454–606 (ILRGAPGPPG…PGPPGSQSFY (153 aa)). The Collagen-like 1 domain occupies 455–513 (LRGAPGPPGPRGFKGDMGVKGPVGGRGPKGDPGSLGPLGPQGPQGQPGEAGPVGERGPV). The segment covering 485–519 (DPGSLGPLGPQGPQGQPGEAGPVGERGPVGPRGFP) has biased composition (low complexity). Positions 526 to 535 (GSFGTGGPRG) are enriched in gly residues. Residues 544–603 (GPPGPEGPPGSPGPSGPQGKPGIAGKTGSPGQRGAMGPKGEPGIQGPPGLPGPPGPPGSQ) enclose the Collagen-like 2 domain. Composition is skewed to pro residues over residues 545–558 (PPGP…PGPS) and 591–600 (PGLPGPPGPP).

As to expression, expressed ubiquitously.

The protein localises to the endoplasmic reticulum membrane. It localises to the golgi apparatus membrane. Seems to protect cells by scavenging oxidative molecules or harmful products of oxidation. This chain is Scavenger receptor class A member 3 (SCARA3), found in Homo sapiens (Human).